The following is a 500-amino-acid chain: Serine carboxypeptidase 3 (500 aa).

An N-terminal signal peptide occupies residues 1–21 (MATARVSLILLVVVLAASACA). The propeptide occupies 22–73 (EGLRLPRDAKFPAAQAERLIRSLNLLPKEAGPTGAGDVPSVAPGELLERRVT). 3 cysteine pairs are disulfide-bonded: Cys126-Cys366, Cys294-Cys309, and Cys332-Cys337. A glycan (N-linked (GlcNAc...) asparagine) is linked at Asn144. Residue Ser216 is part of the active site. Residue Asp404 is part of the active site. A substrate-binding site is contributed by Cys407. His461 is an active-site residue. Residues 485-500 (EEWLAELPEQPMYAAM) constitute a propeptide that is removed on maturation.

It belongs to the peptidase S10 family. In terms of assembly, monomer.

It carries out the reaction Release of a C-terminal amino acid with broad specificity.. The sequence is that of Serine carboxypeptidase 3 (CBP3) from Oryza sativa subsp. japonica (Rice).